Here is a 369-residue protein sequence, read N- to C-terminus: Glycine oxidase (369 aa).

FAD contacts are provided by residues 14 to 15, 34 to 35, 42 to 43, 47 to 49, and V174; these read II, ES, TT, and AGM. 2 residues coordinate substrate: R302 and R329. Position 327–333 (327–333) interacts with FAD; it reads HFRNGIL.

It belongs to the DAO family. ThiO subfamily. In terms of assembly, homotetramer. Requires FAD as cofactor.

It is found in the cytoplasm. It carries out the reaction glycine + O2 + H2O = glyoxylate + H2O2 + NH4(+). The catalysed reaction is N-ethylglycine + O2 + H2O = ethylamine + glyoxylate + H2O2. The enzyme catalyses sarcosine + O2 + H2O = methylamine + glyoxylate + H2O2. It catalyses the reaction D-alanine + O2 + H2O = pyruvate + H2O2 + NH4(+). It carries out the reaction glyphosate + O2 + H2O = aminomethylphosphonate + glyoxylate + H2O2 + H(+). It functions in the pathway cofactor biosynthesis; thiamine diphosphate biosynthesis. With respect to regulation, is competitively inhibited by glycolate. In terms of biological role, catalyzes the FAD-dependent oxidative deamination of various amines and D-amino acids to yield the corresponding alpha-keto acids, ammonia/amine, and hydrogen peroxide. Oxidizes sarcosine (N-methylglycine), N-ethylglycine and glycine. Can also oxidize the herbicide glyphosate (N-phosphonomethylglycine). Displays lower activities on D-alanine, D-valine, D-proline and D-methionine. Does not act on L-amino acids and other D-amino acids. Is essential for thiamine biosynthesis since the oxidation of glycine catalyzed by ThiO generates the glycine imine intermediate (dehydroglycine) required for the biosynthesis of the thiazole ring of thiamine pyrophosphate. This chain is Glycine oxidase, found in Bacillus subtilis (strain 168).